The following is a 70-amino-acid chain: Large ribosomal subunit protein bL31 (70 aa).

Zn(2+) contacts are provided by cysteine 16, cysteine 18, cysteine 37, and cysteine 40.

This sequence belongs to the bacterial ribosomal protein bL31 family. Type A subfamily. As to quaternary structure, part of the 50S ribosomal subunit. Zn(2+) serves as cofactor.

Its function is as follows. Binds the 23S rRNA. In Klebsiella pneumoniae (strain 342), this protein is Large ribosomal subunit protein bL31.